The chain runs to 119 residues: Ribonuclease P protein component (119 aa).

It belongs to the RnpA family. As to quaternary structure, consists of a catalytic RNA component (M1 or rnpB) and a protein subunit.

The enzyme catalyses Endonucleolytic cleavage of RNA, removing 5'-extranucleotides from tRNA precursor.. In terms of biological role, RNaseP catalyzes the removal of the 5'-leader sequence from pre-tRNA to produce the mature 5'-terminus. It can also cleave other RNA substrates such as 4.5S RNA. The protein component plays an auxiliary but essential role in vivo by binding to the 5'-leader sequence and broadening the substrate specificity of the ribozyme. The polypeptide is Ribonuclease P protein component (Halalkalibacterium halodurans (strain ATCC BAA-125 / DSM 18197 / FERM 7344 / JCM 9153 / C-125) (Bacillus halodurans)).